The following is a 726-amino-acid chain: Catalase-peroxidase (726 aa).

Polar residues predominate over residues 1 to 13; the sequence is MSMSEETNNSLSS. Residues 1–34 form a disordered region; sequence MSMSEETNNSLSSGKCPFHHGGSDQSAGEGTGSR. Positions 105 to 226 form a cross-link, tryptophyl-tyrosyl-methioninium (Trp-Tyr) (with M-252); it reads WHGAGTYRSV…LAATEMGLIY (122 aa). Histidine 106 acts as the Proton acceptor in catalysis. Positions 226 to 252 form a cross-link, tryptophyl-tyrosyl-methioninium (Tyr-Met) (with W-105); that stretch reads YVNPEGPNASGEPLSAAAAIRATFGNM. Histidine 267 is a binding site for heme b.

Belongs to the peroxidase family. Peroxidase/catalase subfamily. As to quaternary structure, homodimer or homotetramer. Heme b serves as cofactor. In terms of processing, formation of the three residue Trp-Tyr-Met cross-link is important for the catalase, but not the peroxidase activity of the enzyme.

The catalysed reaction is H2O2 + AH2 = A + 2 H2O. It carries out the reaction 2 H2O2 = O2 + 2 H2O. In terms of biological role, bifunctional enzyme with both catalase and broad-spectrum peroxidase activity. This is Catalase-peroxidase from Enterobacter sp. (strain 638).